The following is a 207-amino-acid chain: dTTP/UTP pyrophosphatase (207 aa).

D79 serves as the catalytic Proton acceptor.

The protein belongs to the Maf family. YhdE subfamily. It depends on a divalent metal cation as a cofactor.

It is found in the cytoplasm. It catalyses the reaction dTTP + H2O = dTMP + diphosphate + H(+). The enzyme catalyses UTP + H2O = UMP + diphosphate + H(+). Functionally, nucleoside triphosphate pyrophosphatase that hydrolyzes dTTP and UTP. May have a dual role in cell division arrest and in preventing the incorporation of modified nucleotides into cellular nucleic acids. This chain is dTTP/UTP pyrophosphatase, found in Nitrobacter winogradskyi (strain ATCC 25391 / DSM 10237 / CIP 104748 / NCIMB 11846 / Nb-255).